We begin with the raw amino-acid sequence, 412 residues long: Dihydrolipoyllysine-residue acetyltransferase component of pyruvate dehydrogenase complex (412 aa).

Positions 2-78 (PIKILMPVLS…PVNSLIAVLS (77 aa)) constitute a Lipoyl-binding domain. N6-lipoyllysine is present on K43. A Peripheral subunit-binding (PSBD) domain is found at 132 to 169 (FASPLAKRLAKMGNIRLESVKGSGPHGRIVKQDILSYT). The active site involves H385.

Belongs to the 2-oxoacid dehydrogenase family. As to quaternary structure, forms a 24-polypeptide structural core with octahedral symmetry. The cofactor is (R)-lipoate.

It catalyses the reaction N(6)-[(R)-dihydrolipoyl]-L-lysyl-[protein] + acetyl-CoA = N(6)-[(R)-S(8)-acetyldihydrolipoyl]-L-lysyl-[protein] + CoA. The pyruvate dehydrogenase complex catalyzes the overall conversion of pyruvate to acetyl-CoA and CO(2). It contains multiple copies of three enzymatic components: pyruvate dehydrogenase (E1), dihydrolipoamide acetyltransferase (E2) and lipoamide dehydrogenase (E3). This is Dihydrolipoyllysine-residue acetyltransferase component of pyruvate dehydrogenase complex (pdhC) from Rickettsia felis (strain ATCC VR-1525 / URRWXCal2) (Rickettsia azadi).